We begin with the raw amino-acid sequence, 1009 residues long: Membrane alanyl aminopeptidase (1009 aa).

The signal sequence occupies residues 1 to 15; that stretch reads MAAIKLLVLSLACAC. Residues 16–52 constitute a propeptide, activation peptide; that stretch reads VIAHSPIPPASRTIFLDERLEGGAFENIDAFENIELS. 338-342 contributes to the substrate binding site; sequence GAMEN. His-374 is a binding site for Zn(2+). Glu-375 (proton acceptor) is an active-site residue. Positions 378 and 397 each coordinate Zn(2+). A glycan (N-linked (GlcNAc...) asparagine) is linked at Asn-906. The disordered stretch occupies residues 955-980; sequence PSTSTTSTTAAPTTVTQPTITEPSTP. Asp-987 carries GPI-anchor amidated aspartate lipidation. Positions 988–1009 are cleaved as a propeptide — removed in mature form; the sequence is SAMTSFASLFIISLGAILHLIL.

The protein belongs to the peptidase M1 family. The cofactor is Zn(2+).

It is found in the cell membrane. In terms of biological role, binds to the B.thuringiensis toxin, CryIA(C). The polypeptide is Membrane alanyl aminopeptidase (Heliothis virescens (Tobacco budworm moth)).